We begin with the raw amino-acid sequence, 1222 residues long: MDNNNNNFSTPKQPTINSTTGGQLRSRSNSSPSTSSISTPRNGSTTATTSSITNSIGKGSLVFSTMENAKKTLNMDSLSTPMSQSSKKRLSMNSSLLPPSSIPLPPSQQLSAKKDPSKRHSSFISTTTTTSLGSRPSTPQPNHTTNNNNNNNNGSNGNNVTSTNISSMLESNNSEILSQNQKVTLSTSSNTAFSSLPSSTNNGNNPLSNSGGGNGNHHLVNSNSSTSTPSPTMFISTTSPPPELSLMEGFNQHNLTTTTTTTTTTTNNTLNTSNGINSNSLSPSSHLNNGSNNNNNNNHLNLNNRSSSPSPTPSSSSISGRRTPIQNFNSVGGVNITSKTQPLFSDREESIQAVCRFRPETAAEQTLGPSEKQLTIGTDQTTIHITPTSSSSSSMAQAFRFSKVYQPNTTQESFYNEVGKPLIDNIVNGYNVGIIAYGQTGAGKTFSLGFSGGEGNDSYNSYCNRSEFYNNSHYLYGSQQQQQQQQLLPSSWGIMPRIIKDLFIKQDEQQSMNTPQRIKFTTKISYLEVYKEKVYDLLSEGGVNDIEIRMADGGFIVPDAVQSSIQTFTDFLTHLQHIEKNRKIAETKKNMASSRSHAIFIVSLLKEDLENKMTVTSLLYLVDLAGSESASKIDGTTSKIEETKSINKSLYALGGVIEDMSKNSKHVRYRDSKLTQLLQQCFGGNSKTCLIVNCSSSNHESVIRETIQSLNFGQRAQSVKNKPLQNVEESHSELKAKLRELNKDIETYKKFIEKISINSGVIPPSSVATYITQLQNACEELKKKNDRLQEDIINLEEENSDLPKKFNVLNKNNVSQIEILTQELELSKQINQEQLLKIEQYSQKYQATNEEIQKSFNHRQQLVNDLHDSNEKSKQLELKLKDALLNSKSESDEIRLKLTKALEESTDKDQRINTLESNKQKWKSKCNEVVRQSKELQDRLNILQSTYSNSVDSLSNSSLNNNNNESLEEIKKLKLNISSLTNQHIEREKSLQKEIDLARSKHTEQTLILKNLKTQIDTLTNKLEIQFPTIVNNNQQQQQSTQSSSSSSIESNLIISMNTIEVLFEKICKNQEQTNTIISTNVESIMGKLVEIDENEEFIRKEKDRERERAENLKNTLEDAQSNFLKQQEEIKQFIETQLKNKNNINNNNNIKNNNNNNKLKSKKVGSSSSSSSNIGSSICINILFFLIILVILFFLMVAVGLTIQNQDYNSQYRSSYFFKTT.

Residues 1–25 (MDNNNNNFSTPKQPTINSTTGGQLR) show a composition bias toward polar residues. Disordered regions lie at residues 1–55 (MDNN…ITNS), 75–165 (MDSL…STNI), and 188–343 (SSNT…TQPL). Residues 26 to 55 (SRSNSSPSTSSISTPRNGSTTATTSSITNS) are compositionally biased toward low complexity. A compositionally biased stretch (polar residues) spans 75-85 (MDSLSTPMSQS). 4 stretches are compositionally biased toward low complexity: residues 122–165 (SFIS…STNI), 194–209 (SSLP…PLSN), 216–238 (NHHL…ISTT), and 254–325 (NLTT…RTPI). A compositionally biased stretch (polar residues) spans 326–343 (QNFNSVGGVNITSKTQPL). One can recognise a Kinesin motor domain in the interval 350–719 (SIQAVCRFRP…LNFGQRAQSV (370 aa)). An ATP-binding site is contributed by 438–445 (GQTGAGKT). Residues 724 to 1026 (LQNVEESHSE…DTLTNKLEIQ (303 aa)) adopt a coiled-coil conformation. Residues 1144–1174 (NINNNNNIKNNNNNNKLKSKKVGSSSSSSSN) are disordered. Residues 1183–1203 (ILFFLIILVILFFLMVAVGLT) form a helical membrane-spanning segment.

It belongs to the TRAFAC class myosin-kinesin ATPase superfamily. Kinesin family.

The protein resides in the membrane. It is found in the cytoplasm. It localises to the cytoskeleton. Its function is as follows. Microtubule-associated force-producing protein that plays a role in organelle transport. Its motor activity is directed toward the microtubule's plus end. The protein is Kinesin-related protein 9 (kif9) of Dictyostelium discoideum (Social amoeba).